Here is a 72-residue protein sequence, read N- to C-terminus: Late effector protein 1 (72 aa).

The signal sequence occupies residues 1-22 (MKCYLVVVVAALCTLVAQGSVG). N66 is a glycosylation site (N-linked (GlcNAc...) asparagine).

This sequence belongs to the lep1 family. In terms of assembly, interacts at the cell wall with secreted rep1 repellent peptides.

Its subcellular location is the secreted. It is found in the cell wall. In terms of biological role, core effector contributing to spore formation and tumor formation at the host plant. Modulates surface hydrophobicity promoting cell-cell or cell-surface contacts. Lep1 and rep1 interact in aerial hyphae to form a strong hydrophobic layer. Plays a crucial role in hyphal aggregation that might be a prerequisite for strong proliferation of diploid cells and for induction of the morphological changes associated with spore formation. The chain is Late effector protein 1 from Sporisorium reilianum (strain SRZ2) (Maize head smut fungus).